The primary structure comprises 379 residues: UDP-4-amino-4-deoxy-L-arabinose--oxoglutarate aminotransferase (379 aa).

The residue at position 182 (Lys-182) is an N6-(pyridoxal phosphate)lysine.

The protein belongs to the DegT/DnrJ/EryC1 family. ArnB subfamily. Homodimer. It depends on pyridoxal 5'-phosphate as a cofactor.

The catalysed reaction is UDP-4-amino-4-deoxy-beta-L-arabinose + 2-oxoglutarate = UDP-beta-L-threo-pentopyranos-4-ulose + L-glutamate. Its pathway is nucleotide-sugar biosynthesis; UDP-4-deoxy-4-formamido-beta-L-arabinose biosynthesis; UDP-4-deoxy-4-formamido-beta-L-arabinose from UDP-alpha-D-glucuronate: step 2/3. It participates in bacterial outer membrane biogenesis; lipopolysaccharide biosynthesis. In terms of biological role, catalyzes the conversion of UDP-4-keto-arabinose (UDP-Ara4O) to UDP-4-amino-4-deoxy-L-arabinose (UDP-L-Ara4N). The modified arabinose is attached to lipid A and is required for resistance to polymyxin and cationic antimicrobial peptides. This chain is UDP-4-amino-4-deoxy-L-arabinose--oxoglutarate aminotransferase, found in Salmonella heidelberg (strain SL476).